A 103-amino-acid polypeptide reads, in one-letter code: uncharacterized protein (103 aa).

This is an uncharacterized protein from Methanocaldococcus jannaschii (strain ATCC 43067 / DSM 2661 / JAL-1 / JCM 10045 / NBRC 100440) (Methanococcus jannaschii).